The following is a 185-amino-acid chain: Biofilm operon icaADBC HTH-type negative transcriptional regulator IcaR (185 aa).

Residues 1-59 (MKDKIIDNAITLFSEKGYDGTTLDDISKSVNIKKASLYYHYDNKEEIYRKSVENCFNYF) enclose the HTH tetR-type domain. The H-T-H motif DNA-binding region spans 22-41 (TLDDISKSVNIKKASLYYHY).

As to quaternary structure, homodimer.

Functionally, represses transcription of the icaADBC operon necessary for biofilm production. The protein is Biofilm operon icaADBC HTH-type negative transcriptional regulator IcaR (icaR) of Staphylococcus epidermidis (strain ATCC 35984 / DSM 28319 / BCRC 17069 / CCUG 31568 / BM 3577 / RP62A).